Consider the following 503-residue polypeptide: AMP phosphorylase (503 aa).

Residues Gly-168, 194–199, and Thr-203 each bind AMP; that span reads SRAITS. The active-site Proton donor is the Asp-256. Positions 264 and 288 each coordinate AMP.

Belongs to the thymidine/pyrimidine-nucleoside phosphorylase family. Type 2 subfamily.

The enzyme catalyses AMP + phosphate = alpha-D-ribose 1,5-bisphosphate + adenine. It carries out the reaction CMP + phosphate = cytosine + alpha-D-ribose 1,5-bisphosphate. It catalyses the reaction UMP + phosphate = alpha-D-ribose 1,5-bisphosphate + uracil. In terms of biological role, catalyzes the conversion of AMP and phosphate to adenine and ribose 1,5-bisphosphate (R15P). Exhibits phosphorylase activity toward CMP and UMP in addition to AMP. Functions in an archaeal AMP degradation pathway, together with R15P isomerase and RubisCO. The sequence is that of AMP phosphorylase from Pyrococcus horikoshii (strain ATCC 700860 / DSM 12428 / JCM 9974 / NBRC 100139 / OT-3).